We begin with the raw amino-acid sequence, 235 residues long: MSVISMKQLLEAGVHFGWQTRRWNPKMKKYIFTERNGIYLIDIQKTVKKVEEAYNFVRELAANGGKILFVGTKRQAQESVKEEAERCGMFYVNQRRIGGTLTNFATLQKRIKRLREIEKMEEDGVFDVLPKKEVIGLKKEKERLEKFIGGIKDMKELPDALFVIDPRKERIAVAEARKLNIPIIGIVDTNNDPCEGGYVIPANDDAIRAVKLLTSKIADAVLEAKQGEEAAVAAE.

The protein belongs to the universal ribosomal protein uS2 family.

This chain is Small ribosomal subunit protein uS2 (rpsB), found in Geobacillus stearothermophilus (Bacillus stearothermophilus).